The following is a 441-amino-acid chain: GTPase Der (441 aa).

2 EngA-type G domains span residues 4–169 and 178–353; these read PVVA…PEDI and IKVA…DQAA. Residues 10-17, 57-61, 120-123, 184-191, 231-235, and 296-299 contribute to the GTP site; these read GRPNVGKS, DTGGI, NKVD, GKPNAGKS, DTAGI, and NKWD. The KH-like domain maps to 354–438; it reads FRISTGMLND…PIRFIHRQRE (85 aa).

It belongs to the TRAFAC class TrmE-Era-EngA-EngB-Septin-like GTPase superfamily. EngA (Der) GTPase family. Associates with the 50S ribosomal subunit.

Functionally, GTPase that plays an essential role in the late steps of ribosome biogenesis. The polypeptide is GTPase Der (Ruminiclostridium cellulolyticum (strain ATCC 35319 / DSM 5812 / JCM 6584 / H10) (Clostridium cellulolyticum)).